The following is a 1385-amino-acid chain: DNA-directed RNA polymerase subunit beta'' (1385 aa).

Residues Cys224, Cys294, Cys301, and Cys304 each coordinate Zn(2+).

The protein belongs to the RNA polymerase beta' chain family. RpoC2 subfamily. In plastids the minimal PEP RNA polymerase catalytic core is composed of four subunits: alpha, beta, beta', and beta''. When a (nuclear-encoded) sigma factor is associated with the core the holoenzyme is formed, which can initiate transcription. The cofactor is Zn(2+).

Its subcellular location is the plastid. The protein localises to the chloroplast. The enzyme catalyses RNA(n) + a ribonucleoside 5'-triphosphate = RNA(n+1) + diphosphate. DNA-dependent RNA polymerase catalyzes the transcription of DNA into RNA using the four ribonucleoside triphosphates as substrates. The protein is DNA-directed RNA polymerase subunit beta'' of Illicium oligandrum (Star anise).